Reading from the N-terminus, the 667-residue chain is Mannosyl-oligosaccharide alpha-1,2-mannosidase IA (667 aa).

Residues 1 to 18 (MYRISPIGRKSNFHSREK) are Cytoplasmic-facing. The chain crosses the membrane as a helical; Signal-anchor for type II membrane protein span at residues 19 to 39 (CLIGLVLVTLCFLCFGGIFLL). Over 40 to 667 (PDNFGSDRVL…PVTLPVSNAS (628 aa)) the chain is Lumenal. The segment at 154-192 (GDNAASQASSHPQSSAQQHNQQQPQLPLGGGGNDQAPDT) is disordered. Residues 156 to 178 (NAASQASSHPQSSAQQHNQQQPQ) show a composition bias toward low complexity. Asn278 is a glycosylation site (N-linked (GlcNAc...) asparagine). Residues Cys483 and Cys515 are joined by a disulfide bond. The Proton donor role is filled by Glu529. Thr640 is a Ca(2+) binding site.

This sequence belongs to the glycosyl hydrolase 47 family. The cofactor is Ca(2+). Mg(2+) serves as cofactor. In terms of tissue distribution, complex spatial distribution during embryogenesis, including expression in lobula plate giant neurons. Also expressed in adult wing and eyes.

It localises to the golgi apparatus membrane. It carries out the reaction N(4)-(alpha-D-Man-(1-&gt;2)-alpha-D-Man-(1-&gt;2)-alpha-D-Man-(1-&gt;3)-[alpha-D-Man-(1-&gt;2)-alpha-D-Man-(1-&gt;3)-[alpha-D-Man-(1-&gt;2)-alpha-D-Man-(1-&gt;6)]-alpha-D-Man-(1-&gt;6)]-beta-D-Man-(1-&gt;4)-beta-D-GlcNAc-(1-&gt;4)-beta-D-GlcNAc)-L-asparaginyl-[protein] (N-glucan mannose isomer 9A1,2,3B1,2,3) + 4 H2O = N(4)-(alpha-D-Man-(1-&gt;3)-[alpha-D-Man-(1-&gt;3)-[alpha-D-Man-(1-&gt;6)]-alpha-D-Man-(1-&gt;6)]-beta-D-Man-(1-&gt;4)-beta-D-GlcNAc-(1-&gt;4)-beta-D-GlcNAc)-L-asparaginyl-[protein] (N-glucan mannose isomer 5A1,2) + 4 beta-D-mannose. The catalysed reaction is N(4)-(alpha-D-Man-(1-&gt;2)-alpha-D-Man-(1-&gt;2)-alpha-D-Man-(1-&gt;3)-[alpha-D-Man-(1-&gt;3)-[alpha-D-Man-(1-&gt;2)-alpha-D-Man-(1-&gt;6)]-alpha-D-Man-(1-&gt;6)]-beta-D-Man-(1-&gt;4)-beta-D-GlcNAc-(1-&gt;4)-beta-D-GlcNAc)-L-asparaginyl-[protein] (N-glucan mannose isomer 8A1,2,3B1,3) + 3 H2O = N(4)-(alpha-D-Man-(1-&gt;3)-[alpha-D-Man-(1-&gt;3)-[alpha-D-Man-(1-&gt;6)]-alpha-D-Man-(1-&gt;6)]-beta-D-Man-(1-&gt;4)-beta-D-GlcNAc-(1-&gt;4)-beta-D-GlcNAc)-L-asparaginyl-[protein] (N-glucan mannose isomer 5A1,2) + 3 beta-D-mannose. It functions in the pathway protein modification; protein glycosylation. In terms of biological role, involved in the maturation of Asn-linked oligosaccharides. Progressively trim alpha-1,2-linked mannose residues from Man(9)GlcNAc(2) to produce Man(5)GlcNAc(2). The polypeptide is Mannosyl-oligosaccharide alpha-1,2-mannosidase IA (Drosophila melanogaster (Fruit fly)).